The sequence spans 120 residues: U13-lycotoxin-Ls1c (120 aa).

The N-terminal stretch at 1–16 is a signal peptide; that stretch reads MKILFVLISILYAVYC. Positions 17–54 are excised as a propeptide; that stretch reads FSSEEDVDSAYLANELEPVEDINSEQYAALEPKEEQER. 3 disulfides stabilise this stretch: Cys-56-Cys-70, Cys-69-Cys-87, and Cys-78-Cys-85. In terms of domain architecture, Agouti spans 56-95; that stretch reads CADMGQDRKDDCDCCLNIATCNCWFGRYFCSCTFGDYQTC.

The protein belongs to the neurotoxin 05 (agouti) family. Contains 5 disulfide bonds. Expressed by the venom gland.

It is found in the secreted. The sequence is that of U13-lycotoxin-Ls1c from Lycosa singoriensis (Wolf spider).